Here is a 406-residue protein sequence, read N- to C-terminus: Multifunctional CCA protein (406 aa).

Gly8 and Arg11 together coordinate ATP. Residues Gly8 and Arg11 each contribute to the CTP site. Mg(2+) is bound by residues Asp21 and Asp23. 3 residues coordinate ATP: Arg91, Arg138, and Arg141. CTP contacts are provided by Arg91, Arg138, and Arg141. The HD domain occupies 229–331; it reads TGIHQEMVSD…LELLGRCDAL (103 aa).

The protein belongs to the tRNA nucleotidyltransferase/poly(A) polymerase family. Bacterial CCA-adding enzyme type 1 subfamily. In terms of assembly, monomer. Can also form homodimers and oligomers. The cofactor is Mg(2+). It depends on Ni(2+) as a cofactor.

The catalysed reaction is a tRNA precursor + 2 CTP + ATP = a tRNA with a 3' CCA end + 3 diphosphate. It catalyses the reaction a tRNA with a 3' CCA end + 2 CTP + ATP = a tRNA with a 3' CCACCA end + 3 diphosphate. Functionally, catalyzes the addition and repair of the essential 3'-terminal CCA sequence in tRNAs without using a nucleic acid template. Adds these three nucleotides in the order of C, C, and A to the tRNA nucleotide-73, using CTP and ATP as substrates and producing inorganic pyrophosphate. tRNA 3'-terminal CCA addition is required both for tRNA processing and repair. Also involved in tRNA surveillance by mediating tandem CCA addition to generate a CCACCA at the 3' terminus of unstable tRNAs. While stable tRNAs receive only 3'-terminal CCA, unstable tRNAs are marked with CCACCA and rapidly degraded. In Stenotrophomonas maltophilia (strain K279a), this protein is Multifunctional CCA protein.